Here is a 60-residue protein sequence, read N- to C-terminus: Large ribosomal subunit protein bL32 (60 aa).

This sequence belongs to the bacterial ribosomal protein bL32 family.

This is Large ribosomal subunit protein bL32 from Paramagnetospirillum magneticum (strain ATCC 700264 / AMB-1) (Magnetospirillum magneticum).